The primary structure comprises 362 residues: Probable dual-specificity RNA methyltransferase RlmN (362 aa).

Catalysis depends on glutamate 105, which acts as the Proton acceptor. In terms of domain architecture, Radical SAM core spans 111 to 344; that stretch reads HEYGNSICVT…VTIRREQGHD (234 aa). A disulfide bond links cysteine 118 and cysteine 349. [4Fe-4S] cluster contacts are provided by cysteine 125, cysteine 129, and cysteine 132. S-adenosyl-L-methionine contacts are provided by residues 175 to 176, serine 207, 230 to 232, and asparagine 306; these read GE and SLH. Cysteine 349 acts as the S-methylcysteine intermediate in catalysis.

The protein belongs to the radical SAM superfamily. RlmN family. Requires [4Fe-4S] cluster as cofactor.

The protein resides in the cytoplasm. The catalysed reaction is adenosine(2503) in 23S rRNA + 2 reduced [2Fe-2S]-[ferredoxin] + 2 S-adenosyl-L-methionine = 2-methyladenosine(2503) in 23S rRNA + 5'-deoxyadenosine + L-methionine + 2 oxidized [2Fe-2S]-[ferredoxin] + S-adenosyl-L-homocysteine. It carries out the reaction adenosine(37) in tRNA + 2 reduced [2Fe-2S]-[ferredoxin] + 2 S-adenosyl-L-methionine = 2-methyladenosine(37) in tRNA + 5'-deoxyadenosine + L-methionine + 2 oxidized [2Fe-2S]-[ferredoxin] + S-adenosyl-L-homocysteine. In terms of biological role, specifically methylates position 2 of adenine 2503 in 23S rRNA and position 2 of adenine 37 in tRNAs. This chain is Probable dual-specificity RNA methyltransferase RlmN, found in Bacillus anthracis (strain A0248).